A 248-amino-acid polypeptide reads, in one-letter code: Pyridoxine 5'-phosphate synthase (248 aa).

Asparagine 12 lines the 3-amino-2-oxopropyl phosphate pocket. Position 14–15 (14–15 (DH)) interacts with 1-deoxy-D-xylulose 5-phosphate. Arginine 23 serves as a coordination point for 3-amino-2-oxopropyl phosphate. Histidine 48 functions as the Proton acceptor in the catalytic mechanism. Residues arginine 50 and histidine 55 each coordinate 1-deoxy-D-xylulose 5-phosphate. The active-site Proton acceptor is glutamate 75. Threonine 105 lines the 1-deoxy-D-xylulose 5-phosphate pocket. The active-site Proton donor is the histidine 199. Residues glycine 200 and 221-222 (GH) contribute to the 3-amino-2-oxopropyl phosphate site.

This sequence belongs to the PNP synthase family. Homooctamer; tetramer of dimers.

It localises to the cytoplasm. It catalyses the reaction 3-amino-2-oxopropyl phosphate + 1-deoxy-D-xylulose 5-phosphate = pyridoxine 5'-phosphate + phosphate + 2 H2O + H(+). The protein operates within cofactor biosynthesis; pyridoxine 5'-phosphate biosynthesis; pyridoxine 5'-phosphate from D-erythrose 4-phosphate: step 5/5. Its function is as follows. Catalyzes the complicated ring closure reaction between the two acyclic compounds 1-deoxy-D-xylulose-5-phosphate (DXP) and 3-amino-2-oxopropyl phosphate (1-amino-acetone-3-phosphate or AAP) to form pyridoxine 5'-phosphate (PNP) and inorganic phosphate. The chain is Pyridoxine 5'-phosphate synthase from Jannaschia sp. (strain CCS1).